The following is a 357-amino-acid chain: Phosphoribosylformylglycinamidine cyclo-ligase (357 aa).

It belongs to the AIR synthase family.

It is found in the cytoplasm. It carries out the reaction 2-formamido-N(1)-(5-O-phospho-beta-D-ribosyl)acetamidine + ATP = 5-amino-1-(5-phospho-beta-D-ribosyl)imidazole + ADP + phosphate + H(+). The protein operates within purine metabolism; IMP biosynthesis via de novo pathway; 5-amino-1-(5-phospho-D-ribosyl)imidazole from N(2)-formyl-N(1)-(5-phospho-D-ribosyl)glycinamide: step 2/2. This chain is Phosphoribosylformylglycinamidine cyclo-ligase, found in Allorhizobium ampelinum (strain ATCC BAA-846 / DSM 112012 / S4) (Agrobacterium vitis (strain S4)).